Here is a 447-residue protein sequence, read N- to C-terminus: Signal recognition particle 54 kDa protein (447 aa).

GTP is bound by residues 103–110, 185–189, and 245–248; these read GVQGSGKT, DTAGR, and TKMD.

Belongs to the GTP-binding SRP family. SRP54 subfamily. In terms of assembly, part of the signal recognition particle protein translocation system, which is composed of SRP and FtsY. Archaeal SRP consists of a 7S RNA molecule of 300 nucleotides and two protein subunits: SRP54 and SRP19.

It localises to the cytoplasm. The enzyme catalyses GTP + H2O = GDP + phosphate + H(+). In terms of biological role, involved in targeting and insertion of nascent membrane proteins into the cytoplasmic membrane. Binds to the hydrophobic signal sequence of the ribosome-nascent chain (RNC) as it emerges from the ribosomes. The SRP-RNC complex is then targeted to the cytoplasmic membrane where it interacts with the SRP receptor FtsY. In Saccharolobus solfataricus (strain ATCC 35092 / DSM 1617 / JCM 11322 / P2) (Sulfolobus solfataricus), this protein is Signal recognition particle 54 kDa protein.